The sequence spans 309 residues: Small ribosomal subunit protein mS23 (309 aa).

The protein belongs to the mitochondrion-specific ribosomal protein mS23 family. In terms of assembly, component of the mitochondrial small ribosomal subunit.

It is found in the mitochondrion. The chain is Small ribosomal subunit protein mS23 (RSM25) from Lodderomyces elongisporus (strain ATCC 11503 / CBS 2605 / JCM 1781 / NBRC 1676 / NRRL YB-4239) (Yeast).